A 547-amino-acid chain; its full sequence is MRQVLSSLLVIAGLVSGQAIAAPESPPHADIRDSGFVYCVSGQVNTFNPSKASSGLIVDTLAAQFYDRLLDVDPYTYRLMPELAESWEVLDNGATYRFHLRRDVPFQKTDWFTPTRKMNADDVVFTFQRIFDRNNPWHNVNGSNFPYFDSLQFADNVKSVRKLDNHTVEFRLAQPDASFLWHLATHYASVMSAEYARKLEKEDRQEQLDRQPVGTGPYQLSEYRAGQFIRLQRHDDFWRGKPLMPQVVVDLGSGGTGRLSKLLTGECDVLAWPAASQLSILRDDPRLRLTLRPGMNVAYLAFNTAKPPLNNPAVRHALALAINNQRLMQSIYYGTAETAASILPRASWAYDNEAKITEYNPAKSREQLKSLGLENLTLKLWVPTRSQAWNPSPLKTAELIQADMAQVGVKVVIVPVEGRFQEARLMDMSHDLTLSGWATDSNDPDSFFRPLLSCAAIHSQTNLAHWCDPKFDSVLRKALSSQQLAARIEAYDEAQSILAQELPILPLASSLRLQAYRYDIKGLVLSPFGNASFAGVYREKQDEVKKP.

A signal peptide spans 1–21 (MRQVLSSLLVIAGLVSGQAIA).

It belongs to the bacterial solute-binding protein 5 family.

The protein localises to the periplasm. Not part of a putrescine export system. Very similar to a S.typhimurium protein implicated in antimicrobial peptide resistance, but the SapBCDF operon in E.coli is implicated in putrescine export. This Escherichia coli (strain K12) protein is Probable ABC transporter periplasmic-binding protein SapA (sapA).